The following is a 1011-amino-acid chain: MVKKKTNNDKGKEVKENEGKLDIDSESSPHERENDKKKTEDDSLRATESEETNTHNANPNETVRADKFSQEESRPIEDSPHTDKNTAQESCQPSSAEDNVINTDITSLNEKTSTNDEQEKGLPLKISEGPFTISTLLDNVPSDLIYTCCEAYENHIFLGTTTGDLLHYFELERGNYMLVSQTKFDAESNSKIDKILLLPKVEGALILCDNELVLFILPEFAPRPNTTRLKGISDVVICNFSRSSKAYRIYAFHAEGVRLLKISADSLVLTKAFNFKLIDKACAHEETLMVSKLNSYELINLKSSQVIPLFRISETDEDLEPIITSFNEQSEFLVCSGGGSYDSGAMALVVNHHGDIIKGTIVLKNYPRNVIVEFPYIIAESAFQSVDIYSALPSEKSQLLQSITTSGSDLKISKSDNVFTNTNNSEEFKEKIFNKLRLEPLTHSDNKFRIERERAFVEESYEEKTSLIVYNNLGIHLLVPTPMVLRFTSCEESEIDNIEDQLKKLAKKDLTKFEHIEAKYLMSLLLFLMTLHYDHIEDEVMKKWCDFSDKVDIRILFYMFGWKVYSEIWCFHGLINIVERLKSLKLTNKCENILKMLLMMKNELKKKNKTGLLTNDFDDIMKTIDITLFKLRLEKKETITVDMFERESYDEIIREINLHDDKLPRIELLIEIYKEKGEYLKALNLLREAGDYISLVSFIEENLKKLPEDYIKERIADDLLLTLKQGDENTEECAIKKVLKILDMACINKNDFLNKIPAEETSLKVSFIEQLGVQNSNDSKFLFNYYLAKLREIINQSNIWSILGDFIKEYKDDFAYDKTDITNFIHIKLKHSLQCENFSKYYEKCENLKSENEKDDEFINFTFDEISKIDKEHILTLLFFPNELTNWVSSEELLKIYLSFNDFRSVEKYIGKQNLVAVMKQYLDISSLNYSVELVTNLLQRNFELLDDTDIQLKILETIPSVFPVQTISELLLKVLIKYQEKKEESNLRKCLLKNQISISDELSRNFDSQG.

2 stretches are compositionally biased toward basic and acidic residues: residues 1 to 48 and 63 to 86; these read MVKK…RATE and VRAD…DKNT. Residues 1–100 form a disordered region; it reads MVKKKTNNDK…CQPSSAEDNV (100 aa). Polar residues predominate over residues 87–100; sequence AQESCQPSSAEDNV. In terms of domain architecture, CNH spans 143-418; that stretch reads DLIYTCCEAY…DLKISKSDNV (276 aa).

This sequence belongs to the VPS3 family.

Its subcellular location is the cytoplasm. In terms of biological role, required for sorting and processing of soluble vacuolar proteins, integrity of vacuolar morphology, efficient segregation of vacuolar material into the bud during the cell cycle, acidification of the vacuolar lumen, and assembly of the vacuolar H(+)-ATPase. This Saccharomyces cerevisiae (strain ATCC 204508 / S288c) (Baker's yeast) protein is Vacuolar protein sorting-associated protein 3 (VPS3).